A 345-amino-acid chain; its full sequence is Sulfate/thiosulfate import ATP-binding protein CysA (345 aa).

Residues 3–237 enclose the ABC transporter domain; it reads IQVSGLCKHF…PRTEFVYQFV (235 aa). 35–42 serves as a coordination point for ATP; it reads GPSGCGKT.

This sequence belongs to the ABC transporter superfamily. Sulfate/tungstate importer (TC 3.A.1.6) family. In terms of assembly, the complex is composed of two ATP-binding proteins (CysA), two transmembrane proteins (CysT and CysW) and a solute-binding protein (CysP).

It localises to the cell inner membrane. It carries out the reaction sulfate(out) + ATP + H2O = sulfate(in) + ADP + phosphate + H(+). The catalysed reaction is thiosulfate(out) + ATP + H2O = thiosulfate(in) + ADP + phosphate + H(+). Its function is as follows. Part of the ABC transporter complex CysAWTP involved in sulfate/thiosulfate import. Responsible for energy coupling to the transport system. This chain is Sulfate/thiosulfate import ATP-binding protein CysA, found in Vibrio vulnificus (strain CMCP6).